The sequence spans 287 residues: Ribonuclease Z (287 aa).

The Zn(2+) site is built by H64, H66, D68, H69, H124, D191, and H250. Catalysis depends on D68, which acts as the Proton acceptor.

This sequence belongs to the RNase Z family. As to quaternary structure, homodimer. Zn(2+) serves as cofactor.

The catalysed reaction is Endonucleolytic cleavage of RNA, removing extra 3' nucleotides from tRNA precursor, generating 3' termini of tRNAs. A 3'-hydroxy group is left at the tRNA terminus and a 5'-phosphoryl group is left at the trailer molecule.. Functionally, zinc phosphodiesterase, which displays some tRNA 3'-processing endonuclease activity. Probably involved in tRNA maturation, by removing a 3'-trailer from precursor tRNA. The chain is Ribonuclease Z from Pyrobaculum arsenaticum (strain DSM 13514 / JCM 11321 / PZ6).